Here is a 92-residue protein sequence, read N- to C-terminus: Small ribosomal subunit protein uS19 (92 aa).

It belongs to the universal ribosomal protein uS19 family.

In terms of biological role, protein S19 forms a complex with S13 that binds strongly to the 16S ribosomal RNA. This is Small ribosomal subunit protein uS19 from Brucella ovis (strain ATCC 25840 / 63/290 / NCTC 10512).